A 189-amino-acid polypeptide reads, in one-letter code: Peptidyl-tRNA hydrolase (189 aa).

Position 15 (H15) interacts with tRNA. Residue H20 is the Proton acceptor of the active site. 3 residues coordinate tRNA: F66, N68, and N114.

This sequence belongs to the PTH family. In terms of assembly, monomer.

The protein resides in the cytoplasm. The enzyme catalyses an N-acyl-L-alpha-aminoacyl-tRNA + H2O = an N-acyl-L-amino acid + a tRNA + H(+). Hydrolyzes ribosome-free peptidyl-tRNAs (with 1 or more amino acids incorporated), which drop off the ribosome during protein synthesis, or as a result of ribosome stalling. Its function is as follows. Catalyzes the release of premature peptidyl moieties from peptidyl-tRNA molecules trapped in stalled 50S ribosomal subunits, and thus maintains levels of free tRNAs and 50S ribosomes. The protein is Peptidyl-tRNA hydrolase of Streptococcus equi subsp. equi (strain 4047).